The chain runs to 901 residues: Flowering time control protein FPA (901 aa).

RRM domains follow at residues 18–90, 95–166, and 206–281; these read NNLW…YARP, KSLW…FLRS, and KVLW…YSND. The interval 343-416 is disordered; it reads VGKEPNWRRP…SVDGFTPMGV (74 aa). In terms of domain architecture, SPOC spans 441 to 537; sequence WRGMIAKGGT…DDGTTLFLVP (97 aa). Residues 655–736 form a disordered region; it reads SQPAAPESHQ…YPPASNNPNY (82 aa). Polar residues-rich tracts occupy residues 664-682 and 700-716; these read QPMSGPSTVVSTAHQSNGL and HDASNQSFQQYGNQYTP.

Belongs to the RRM Spen family. As to expression, expressed in roots, leaves, stems and flowers. Highest expression in flower stems and meristematic regions.

The protein resides in the nucleus. Its function is as follows. Plays a role in the regulation of flowering time in the autonomous flowering pathway by decreasing FLOWERING LOCUS C mRNA levels. Required for RNA-mediated chromatin silencing of a range of loci in the genome. Cotranscriptionally recognizes aberrant RNA and marks it for silencing. Controls alternative cleavage and polyadenylation on pre-mRNAs and antisense RNAs. Acts redundantly with FCA to prevent the expression of distally polyadenylated antisense RNAs at the FLC locus. In Arabidopsis thaliana (Mouse-ear cress), this protein is Flowering time control protein FPA (FPA).